Reading from the N-terminus, the 74-residue chain is NAD(P)H-quinone oxidoreductase subunit L (74 aa).

2 helical membrane passes run 5–25 (LIIA…VPAA) and 43–63 (AFMY…APLL).

Belongs to the complex I NdhL subunit family. As to quaternary structure, NDH-1 can be composed of about 15 different subunits; different subcomplexes with different compositions have been identified which probably have different functions.

Its subcellular location is the cellular thylakoid membrane. It carries out the reaction a plastoquinone + NADH + (n+1) H(+)(in) = a plastoquinol + NAD(+) + n H(+)(out). It catalyses the reaction a plastoquinone + NADPH + (n+1) H(+)(in) = a plastoquinol + NADP(+) + n H(+)(out). In terms of biological role, NDH-1 shuttles electrons from an unknown electron donor, via FMN and iron-sulfur (Fe-S) centers, to quinones in the respiratory and/or the photosynthetic chain. The immediate electron acceptor for the enzyme in this species is believed to be plastoquinone. Couples the redox reaction to proton translocation, and thus conserves the redox energy in a proton gradient. Cyanobacterial NDH-1 also plays a role in inorganic carbon-concentration. This Synechococcus elongatus (strain ATCC 33912 / PCC 7942 / FACHB-805) (Anacystis nidulans R2) protein is NAD(P)H-quinone oxidoreductase subunit L.